The chain runs to 192 residues: Pterin-4-alpha-carbinolamine dehydratase (192 aa).

The protein belongs to the pterin-4-alpha-carbinolamine dehydratase family.

It catalyses the reaction (4aS,6R)-4a-hydroxy-L-erythro-5,6,7,8-tetrahydrobiopterin = (6R)-L-erythro-6,7-dihydrobiopterin + H2O. The chain is Pterin-4-alpha-carbinolamine dehydratase (Pcd) from Drosophila melanogaster (Fruit fly).